Reading from the N-terminus, the 938-residue chain is Isoleucine--tRNA ligase (938 aa).

The 'HIGH' region motif lies at 58–68; that stretch reads PYANGSIHIGH. Lys183 carries the N6-acetyllysine modification. Glu561 provides a ligand contact to L-isoleucyl-5'-AMP. The 'KMSKS' region signature appears at 602-606; the sequence is KMSKS. Residue Lys605 participates in ATP binding. Cys901, Cys904, Cys921, and Cys924 together coordinate Zn(2+).

Belongs to the class-I aminoacyl-tRNA synthetase family. IleS type 1 subfamily. As to quaternary structure, monomer. Requires Zn(2+) as cofactor.

It is found in the cytoplasm. It carries out the reaction tRNA(Ile) + L-isoleucine + ATP = L-isoleucyl-tRNA(Ile) + AMP + diphosphate. Functionally, catalyzes the attachment of isoleucine to tRNA(Ile). As IleRS can inadvertently accommodate and process structurally similar amino acids such as valine, to avoid such errors it has two additional distinct tRNA(Ile)-dependent editing activities. One activity is designated as 'pretransfer' editing and involves the hydrolysis of activated Val-AMP. The other activity is designated 'posttransfer' editing and involves deacylation of mischarged Val-tRNA(Ile). This is Isoleucine--tRNA ligase from Escherichia coli (strain ATCC 8739 / DSM 1576 / NBRC 3972 / NCIMB 8545 / WDCM 00012 / Crooks).